The following is a 355-amino-acid chain: Zinc finger protein CONSTANS-LIKE 1 (355 aa).

Cysteine 12, cysteine 15, cysteine 35, histidine 40, cysteine 55, cysteine 58, cysteine 78, and histidine 83 together coordinate Zn(2+). Residues 12–54 (CDTCRSAACTVYCRADSAYLCSSCDAQVHAANRLASRHERVRV) form a B box-type 1; atypical zinc finger. The segment at 55–97 (CQSCERAPAAFFCKADAASLCTTCDSEIHSANPLARRHQRVPI) adopts a B box-type 2; atypical zinc-finger fold. The span at 252-264 (ESTTSDATVSNPR) shows a compositional bias: polar residues. Residues 252 to 281 (ESTTSDATVSNPRSPKAVTDQPPYPPAQML) form a disordered region. In terms of domain architecture, CCT spans 286–328 (REARVLRYREKKKMRKFEKTIRYASRKAYAEKRPRIKGRFAKK).

This sequence belongs to the CONSTANS family. As to expression, highly expressed in leaves and at lower levels in stems, flowers and siliques. Not detected in roots.

It localises to the nucleus. Putative transcription factor that may be involved in the light input to the circadian clock but does not affect flowering time. This is Zinc finger protein CONSTANS-LIKE 1 (COL1) from Arabidopsis thaliana (Mouse-ear cress).